The primary structure comprises 356 residues: Phosphoribosyl pyrophosphate synthase-associated protein 1 (356 aa).

N-acetylmethionine is present on methionine 1. Serine 177 and serine 215 each carry phosphoserine.

This sequence belongs to the ribose-phosphate pyrophosphokinase family. In terms of assembly, binds to PRPS1 and PRPS2.

Seems to play a negative regulatory role in 5-phosphoribose 1-diphosphate synthesis. This Mus musculus (Mouse) protein is Phosphoribosyl pyrophosphate synthase-associated protein 1 (Prpsap1).